The chain runs to 254 residues: 4-hydroxy-tetrahydrodipicolinate reductase (254 aa).

Residue 13–18 coordinates NAD(+); the sequence is GAAGRM. Residue arginine 39 coordinates NADP(+). NAD(+) contacts are provided by residues 86–88 and 110–113; these read GTT and AANT. Residue histidine 143 is the Proton donor/acceptor of the active site. A (S)-2,3,4,5-tetrahydrodipicolinate-binding site is contributed by histidine 144. The active-site Proton donor is the lysine 147. 153 to 154 lines the (S)-2,3,4,5-tetrahydrodipicolinate pocket; the sequence is GT.

It belongs to the DapB family.

It is found in the cytoplasm. It carries out the reaction (S)-2,3,4,5-tetrahydrodipicolinate + NAD(+) + H2O = (2S,4S)-4-hydroxy-2,3,4,5-tetrahydrodipicolinate + NADH + H(+). The enzyme catalyses (S)-2,3,4,5-tetrahydrodipicolinate + NADP(+) + H2O = (2S,4S)-4-hydroxy-2,3,4,5-tetrahydrodipicolinate + NADPH + H(+). The protein operates within amino-acid biosynthesis; L-lysine biosynthesis via DAP pathway; (S)-tetrahydrodipicolinate from L-aspartate: step 4/4. Functionally, catalyzes the conversion of 4-hydroxy-tetrahydrodipicolinate (HTPA) to tetrahydrodipicolinate. This Zymomonas mobilis subsp. mobilis (strain ATCC 31821 / ZM4 / CP4) protein is 4-hydroxy-tetrahydrodipicolinate reductase.